The primary structure comprises 181 residues: MSFSDQNLIWVDLEMTGLDPETHKIIEIASIVTDSELNILAEGPVLAVHQPEEELAKMDDWCTNTHTASGLVERVRNSKISEQDAVAQTIEFLEKWVPKGVSPICGNSIGQDRRFLYKHMPELEEYFHYRYLDVSTLKELTRRWKPEVLDGFSKQGTHLALDDIRESIAELKYYRETIFKI.

The 164-residue stretch at 8–171 folds into the Exonuclease domain; that stretch reads LIWVDLEMTG…DDIRESIAEL (164 aa). Tyr129 is an active-site residue.

This sequence belongs to the oligoribonuclease family.

The protein localises to the cytoplasm. 3'-to-5' exoribonuclease specific for small oligoribonucleotides. The protein is Oligoribonuclease of Vibrio parahaemolyticus serotype O3:K6 (strain RIMD 2210633).